Consider the following 514-residue polypeptide: 2,3-bisphosphoglycerate-independent phosphoglycerate mutase (514 aa).

The Mn(2+) site is built by aspartate 14 and serine 64. Catalysis depends on serine 64, which acts as the Phosphoserine intermediate. Substrate contacts are provided by residues histidine 125, 155-156, arginine 187, arginine 193, 263-266, and lysine 336; these read RD and RADR. Aspartate 403, histidine 407, aspartate 444, histidine 445, and histidine 463 together coordinate Mn(2+).

This sequence belongs to the BPG-independent phosphoglycerate mutase family. In terms of assembly, monomer. Requires Mn(2+) as cofactor.

The enzyme catalyses (2R)-2-phosphoglycerate = (2R)-3-phosphoglycerate. It participates in carbohydrate degradation; glycolysis; pyruvate from D-glyceraldehyde 3-phosphate: step 3/5. Functionally, catalyzes the interconversion of 2-phosphoglycerate and 3-phosphoglycerate. In Shewanella sediminis (strain HAW-EB3), this protein is 2,3-bisphosphoglycerate-independent phosphoglycerate mutase.